The sequence spans 475 residues: Methionine aminopeptidase 2-1 (475 aa).

A compositionally biased stretch (basic and acidic residues) spans 1–12 (MGSKSPEGHRQT). Residues 1–97 (MGSKSPEGHR…LKQSSPPRVL (97 aa)) are disordered. Positions 44-57 (NLDDDNDDDGEANE) are enriched in acidic residues. The segment covering 70 to 83 (KKKKRKRSKKKTKK) has biased composition (basic residues). Position 211 (His211) interacts with substrate. 3 residues coordinate a divalent metal cation: Asp232, Asp243, and His312. His320 is a substrate binding site. A divalent metal cation contacts are provided by Glu345 and Glu456.

Belongs to the peptidase M24A family. Methionine aminopeptidase eukaryotic type 2 subfamily. Co(2+) is required as a cofactor. The cofactor is Zn(2+). Mn(2+) serves as cofactor. Requires Fe(2+) as cofactor.

Its subcellular location is the cytoplasm. The catalysed reaction is Release of N-terminal amino acids, preferentially methionine, from peptides and arylamides.. In terms of biological role, cotranslationally removes the N-terminal methionine from nascent proteins. The N-terminal methionine is often cleaved when the second residue in the primary sequence is small and uncharged (Met-Ala-, Cys, Gly, Pro, Ser, Thr, or Val). The chain is Methionine aminopeptidase 2-1 from Aspergillus niger (strain ATCC MYA-4892 / CBS 513.88 / FGSC A1513).